Reading from the N-terminus, the 901-residue chain is MLIPSKLSRPVRLEHTVVRERLLAKLSGANNYRLVLITSPAGYGKTTLISQWAAGKNDLGWFSLDEGDNQQERFASYLIAAIQQATGNHCAASEAMVQKRQYASLSSLFAQLFIELADWQRPLYLVIDDYHLINNPVIHDAMRFFLRHQPENMTLVVLSRNLPQLGIANLRVRDQLLEIGSQQLAFTHQEAKQFFDCRLTSPIEADDSSRLCDDVAGWATALQLIALSARQNNSSAQHSARRLAGINASHLSDYLVDEVLDNVDARTRNFLLKSSLLRSMNDALIVRVTGEENGQMQLEEIERQGLFLQRMDDSGEWFRYHPLFGSFLRQRCQWELAVELPEIHRAAAESWMAQGFPSEAIHHALAAGDAKMLRDILLNHAWGMFNHSELGLLEQSLSALPWSNLLENPRLILLQAWLMQSQHRYSEVNTLLARAEQEMSVEMDTAMHGDFNALRAQVAINDGDQDEAERLSMVALEELPLANYYSRIVATSVHGEVLHCKGKLTKSLAVMQQTEQMARRHDVWHYALWSIIQQSEILFAQGFLQAAWESQEKAFQLVREQHLEQLPMHEFLLRIRSQLLWAWARLDEAEACARQGMDVLSTYQPQQQLQCLALMVQCSLARGDLDNARSHLNRLENLLGNGHYHSDWVSNADKVRVIYWQMTGDKTAAANWLRQTPKPEFANNHFLQSQWRNIARAQILLGDFEPAEMVLEELNENARSLRLMSDLNRNLLLLNQLYWQAGRKSEAQKALLEALTLANRTGFINHFVIEGEAMAQQLRQLIQLNTLPELEQHRAQRILRDINQHHRHKFAHFDEGFVERLLNHPEVPELIRTSPLTQREWQVLGLIYSGYSNEQIAGELDVAATTIKTHIRNLYQKLGVAHRQDAVQHAQQLLKMMGYGV.

Residue 39-46 (SPAGYGKT) participates in ATP binding. The 66-residue stretch at 829 to 894 (ELIRTSPLTQ…DAVQHAQQLL (66 aa)) folds into the HTH luxR-type domain. Residues 853-872 (NEQIAGELDVAATTIKTHIR) constitute a DNA-binding region (H-T-H motif).

The protein belongs to the MalT family. As to quaternary structure, monomer in solution. Oligomerizes to an active state in the presence of the positive effectors ATP and maltotriose.

Its activity is regulated as follows. Activated by ATP and maltotriose, which are both required for DNA binding. Positively regulates the transcription of the maltose regulon whose gene products are responsible for uptake and catabolism of malto-oligosaccharides. Specifically binds to the promoter region of its target genes, recognizing a short DNA motif called the MalT box. In Klebsiella pneumoniae (strain 342), this protein is HTH-type transcriptional regulator MalT.